The primary structure comprises 480 residues: Cysteine--tRNA ligase (480 aa).

C29 is a binding site for Zn(2+). A 'HIGH' region motif is present at residues 31 to 41 (VTVYDHCHIGH). Positions 209, 234, and 238 each coordinate Zn(2+). The 'KMSKS' region motif lies at 266–270 (KMSKS). ATP is bound at residue K269.

It belongs to the class-I aminoacyl-tRNA synthetase family. In terms of assembly, monomer. Requires Zn(2+) as cofactor.

It localises to the cytoplasm. It catalyses the reaction tRNA(Cys) + L-cysteine + ATP = L-cysteinyl-tRNA(Cys) + AMP + diphosphate. This is Cysteine--tRNA ligase from Geobacter sp. (strain M21).